A 130-amino-acid polypeptide reads, in one-letter code: Small ribosomal subunit protein uS9 (130 aa).

This sequence belongs to the universal ribosomal protein uS9 family.

In Stenotrophomonas maltophilia (strain R551-3), this protein is Small ribosomal subunit protein uS9.